A 352-amino-acid polypeptide reads, in one-letter code: MAACVPPGEAPRSASGTPTRRQVTIVRIYLDGVYGIGKSTTGRVMASAASGGSPTLYFPEPMAYWRTLFETDVISGIYDTQNRKQQGNLAVDDAALITAHYQSRFTTPYLILHDHTCTLFGGNSLQRGTQPDLTLVFDRHPVASTVCFPAARYLLGDMSMCALMAMVATLPREPQGGNIVVTTLNVEEHIRRLRTRARIGEQIDITLIATLRNVYFMLVNTCHFLRSGRVWRDGWGELPTSCGAYKHRATQMDAFQERVSPELGDTLFALFKTQELLDDRGVILEVHAWALDALMLKLRNLNVFSADLSGTPRQCAAVVESLLPLMSSTLSDFDSASALERAARTFNAEMGV.

Gly32–Ser39 contacts ATP. Glu60 functions as the Proton acceptor in the catalytic mechanism. Residues Tyr78, Gln102, Phe105, and Phe148 each coordinate substrate. Position 192 (Arg192) interacts with ATP. Residue Arg198 participates in substrate binding.

The protein belongs to the herpesviridae thymidine kinase family. In terms of assembly, homodimer.

It catalyses the reaction thymidine + ATP = dTMP + ADP + H(+). Functionally, catalyzes the transfer of the gamma-phospho group of ATP to thymidine to generate dTMP in the salvage pathway of pyrimidine synthesis. The dTMP serves as a substrate for DNA polymerase during viral DNA replication. Allows the virus to be reactivated and to grow in non-proliferative cells lacking a high concentration of phosphorylated nucleic acid precursors. The protein is Thymidine kinase of Equine herpesvirus 4 (strain 1942) (EHV-4).